A 405-amino-acid chain; its full sequence is Argininosuccinate synthase (405 aa).

ATP contacts are provided by residues 10 to 18 (AYSGGLDTS) and alanine 37. 2 residues coordinate L-citrulline: tyrosine 88 and serine 93. Glycine 118 lines the ATP pocket. L-aspartate-binding residues include threonine 120, asparagine 124, and aspartate 125. Asparagine 124 is an L-citrulline binding site. Arginine 128, serine 179, serine 188, glutamate 264, and tyrosine 276 together coordinate L-citrulline.

This sequence belongs to the argininosuccinate synthase family. Type 1 subfamily. Homotetramer.

The protein resides in the cytoplasm. It catalyses the reaction L-citrulline + L-aspartate + ATP = 2-(N(omega)-L-arginino)succinate + AMP + diphosphate + H(+). The protein operates within amino-acid biosynthesis; L-arginine biosynthesis; L-arginine from L-ornithine and carbamoyl phosphate: step 2/3. This is Argininosuccinate synthase from Pseudomonas aeruginosa (strain LESB58).